A 713-amino-acid polypeptide reads, in one-letter code: Glycine--tRNA ligase beta subunit (713 aa).

It belongs to the class-II aminoacyl-tRNA synthetase family. As to quaternary structure, tetramer of two alpha and two beta subunits.

The protein resides in the cytoplasm. It carries out the reaction tRNA(Gly) + glycine + ATP = glycyl-tRNA(Gly) + AMP + diphosphate. This Picosynechococcus sp. (strain ATCC 27264 / PCC 7002 / PR-6) (Agmenellum quadruplicatum) protein is Glycine--tRNA ligase beta subunit.